The primary structure comprises 270 residues: 4-hydroxy-tetrahydrodipicolinate reductase (270 aa).

NAD(+) contacts are provided by residues 11-16 (GASGRM) and Glu37. Arg38 is a binding site for NADP(+). Residues 101–103 (GTT) and 125–128 (APNM) each bind NAD(+). His158 serves as the catalytic Proton donor/acceptor. Residue His159 coordinates (S)-2,3,4,5-tetrahydrodipicolinate. Lys162 (proton donor) is an active-site residue. 168-169 (GT) provides a ligand contact to (S)-2,3,4,5-tetrahydrodipicolinate.

This sequence belongs to the DapB family.

Its subcellular location is the cytoplasm. The enzyme catalyses (S)-2,3,4,5-tetrahydrodipicolinate + NAD(+) + H2O = (2S,4S)-4-hydroxy-2,3,4,5-tetrahydrodipicolinate + NADH + H(+). It catalyses the reaction (S)-2,3,4,5-tetrahydrodipicolinate + NADP(+) + H2O = (2S,4S)-4-hydroxy-2,3,4,5-tetrahydrodipicolinate + NADPH + H(+). The protein operates within amino-acid biosynthesis; L-lysine biosynthesis via DAP pathway; (S)-tetrahydrodipicolinate from L-aspartate: step 4/4. Its function is as follows. Catalyzes the conversion of 4-hydroxy-tetrahydrodipicolinate (HTPA) to tetrahydrodipicolinate. This Shewanella amazonensis (strain ATCC BAA-1098 / SB2B) protein is 4-hydroxy-tetrahydrodipicolinate reductase.